Here is a 254-residue protein sequence, read N- to C-terminus: 5'-nucleotidase SurE (254 aa).

4 residues coordinate a divalent metal cation: Asp-8, Asp-9, Ser-39, and Asn-91.

The protein belongs to the SurE nucleotidase family. The cofactor is a divalent metal cation.

The protein localises to the cytoplasm. The enzyme catalyses a ribonucleoside 5'-phosphate + H2O = a ribonucleoside + phosphate. Nucleotidase that shows phosphatase activity on nucleoside 5'-monophosphates. The chain is 5'-nucleotidase SurE from Pseudoalteromonas translucida (strain TAC 125).